Here is a 5065-residue protein sequence, read N- to C-terminus: MELEKTHLINYFLEICPTVLDCSRKELQSVLIKKEEEKIRKFLLDKNINLIVIGKEGNDNVEREMDDKENDNVDINMNEEYNSMRTSNLDNKYNNFLFVELMINYKCVTKSISIAFMKRNKENFLSLNDKIDNRNKINLSNELLMFVCGQNDCNTPLDLVYLYLSQGFNNIFDAASGYGQNISGPDSSHFNYGTKKDVENMFSINNKYIGYEGENKVSNILMNNVSKKLNELLISMKNAQIDLNIPIINLHVDKRIKKLLEENPNVDDMKPDKLKQLCESQEFINQLQKDVTKWIEDIQKLTRLNGEFKSGGSALSEINFWIGYENALYQLESQLKNPEVILTLHILKNAKRYFATMSFDSDIQLKQSKEYVLNVNILMKDFPIEDLLGATSIQQIIQAVRNIFNHLKKLKNTTKYPLSRSYNFVESLSRDLNNTMKKVLCTQSLMNMDYEEFDVLISGCVEIFRLWNEEMRIFKDMVRELIKKRSFNERAPAKMVFEHIHLQERLDEIKKFRKQHEKFKSVISTVFGSNNKSLGINLYKDINTAYNIFLSLDPLDLSKNGEDNWEKAKLSYESKVNRVESQITFKLRDQLGGSKTSAEMFHAFSKFNPLFFRPKIRGAIQEYQNTLIQIVVDDLRKLQMIYINGYLKSDSQKVSTIRDIPLVAGSIIWAKQIERKLEDSLKRIENVLGRGWEQHSEGKILRQNIDNFKNLLSQNKTFEKWLKNIKSADKFDMYDNIINIKKLGGNNYEILANYDFQFFNIFKEVRYLQSINLRVPYSIKVKADETKLIYPYALTLQKTFRTYMKICISMDNQAKDVPFNQTIKKLVAAIHNTVQNKIKEGIYLHWDSDIIETYVRKLSETINTFEFMVDEAMNKNKIVLDSLEKMKTCEVCFDCNELKSLIEIIQKKADELYLEHYRNVHIWIEELNIHINKILTERLEEIIKTWTCEFVNWPNNGKRFICKENIHEFKIKNQKFYLHPSIDSMRQIWFSKLSDAINIICGITRIKNIYQKKEKTNEKIQIKSKGKNTNNEKDDDYIYYTNDSNNKNNIYKNKCDDNNNNIVINDVILDNTYKYIIYFIDKKIYDNAIKSINDMVDKAQKYESIWLQYKTLWQIEIGDIISSFGEDIETWKIFMNEIKQTENTFDTLDTEKYFGPIVIDYRILQSKVSSKFEIWQKEIVSEFSKKLGEKTLYLKEEIEKALYDLNTQSELKNETEITAMHILSMTPKDIVGIMNTYDMDILSKTCNSIYNFIEKINEINKKEELEWSKKCDLLKQSEVLLEKQRYTFPTNWLYIDNIIGKLETVKQICKYQIKLIKDYLPYIQSMVLDFDRKVQNNIKELFEEWNKNKPSHGNANSTKALQIITTFEERIDIINEQYEISEKIRKLLELENSESEIGFHVSPNILKEEINCVKGIWDELKIIYSNICDMKKMLWSNVDPKDVKHRLNNLLESIKKIPAKYRQYEIFDNVQNEIQQYLKTYSLLLDLKSESLKERHWKLILQKLNIKIYYNKLTLGNLWSLHLCIHENVLSEILNQAQGEMALEQFLRGLKDTWNEYELELVQYQNKCKLIKGWNDIFSTIDDHLNAIQSMKISSYIKIFEEETFTWDDKLNRLRNLLDVWMNVQRKWVYLEGVLKGSSDIKSLLPQEYNRFKIIDSDFINIMKKTSDKPKLLELFQMEGFQKQLDRLSDSLSKIQKALGEYLEKQRNKFPRFYFVGDEDLLEMIGNSKDAKIIQRNVNKMFAGINSFILKENTNDIILGMSSREGEEVLFLEALNISSFNTLKEWLIVLEKSMKSSLEFYLDEAAKEILEMDMIECTKIENNKILLWSEKYPNQIILLCLQILWTTNIENELINFSKNPPDESNTLFHKSEKICLNLLEFLAVNVVKQKDHRTRQKFVQMITELVHQRDVIRILIDKNVNNVNSFIWLQYMRYYWDSKKKENKINLIIKMADATFEYGYEYLGMCEKLVQTELTDACFLTLTQALKMKLGGNPFGPAGTGKTESVKALGAQLGRYVLVFNCDESFDFTAMGRIFVGLCQVGAWGCFDEFNRLEERILSAVSEQILTIQTSLVQRKNEIEILNKKIGLNKNVGIFVTMNPGYAGRSNLPDNLKQLFRSFAMIEPNKQLIVEVTLFSQGFISAEHLSSKIVSLFDLCSEQLSKQPHYDFGLRSLKSVLNSAGNLKRLTLLKDESKYVQNNQIGFNETLDNNNNNDNNNERKTTTNTNESNIISMEQTLLLKSVCDTVYPKLVSSDIILIQSLLKGVFPNVNVGDLEEKGLINEIHRLCKLRHFTPEEKWITKICQIYQIMKLQHGVMLVGDVGTGKSSAWKILLDSLEALDNIKGVSYVIDAKSLDKEEIYGKLDNINLEWTDGVFTGILRKIIYNSSTQSGNTNKRHWIVFDGDVDPEWAENLNSVLDDNKLLTLPNGERLPIPESVRILFEVDTLKHATLATVSRCGMIWFSRDILSPIILFKHKLNMLKYGDNDYPRKMDKFKLLLINNNERITEKNQNGNENGNENEKKNINIINNNNSNNSNNIYSMNHMNNYNVNANEHNLQQFDNIDSENIMDNIRMNSRIFFEENEQETSSSYIIRTIPYRAVNIISDYFEENEFVHQCLVEAENYEHVMDYEYIRVIESTCLLLQKGFDNLVKKNEKINNTLSDDDIEKYISKWLVVSILWGIGGSLNLETREKFSMFVQSICSIPLPNDLLSKGKMPNMDNTNKISNTLLDYQPNIEDGEWINWKELVQIIDVDRTEISDATLVIETMDTIRHETILEGWLHLKKPFILCGPPGSGKTMTLTSVLKKSSEFDIASLNFSSGSLPNLLLQTFDHYCEYVKTTSELVLRPLQPGKWLIIFADEINLPTPDKYDTQRIIMFMRQIYESQGFWKYDVNNNSWNWVKIERITFAGACNPPTDAGRNPLSNRFLRHTSVLYVDFPGYESLKQIYGTFNRAILRKFPQSSHMADNLTQAMVDFYTKFSETFTIDMQPHYIYSPRELTRWKLALYETLESCDELKTKDLVRLCICEGLRIFQDRLIYKKEKKETDKIIDDIFKYSFPDITKEDLLRPILFNSYMKNYYTEIDKKDLKVLILSKLKIFNEEEINVQLVLFDDVLDHITRIDRVLRLPLGHLLLVGASGAGKTILSRFVSWINGLSVFQIRAGRNYTTESFEADLRHIMKRAGIKEEKITFIFDESNVLGPAFLERMNALLASGEVPGLFEGDNYITLINECKSAYRSNIGLDESDIFKKFTKQVQQNLHIVFTMNPANPDFANRQATSPALFNRCVIDWFGDWPYSALLQVASEFIFNLILPDNNFYMDYVGNEDGPIKGKIQYKNNKAYFLSRAIVEIHNSVVHINNVLMKKGNRYNYMTPRDFLDFIKHFLKIIDEKKEEVSSQKNHLNSGLNKLKDTEIQVAELRNSLAIKKKTLAEKDLEAEEKMKLMIEQQTETEDKKKKAEILSKKLDEQFIIIDQRKEVVRKELSEVEPKFREAEEAVKNIPKKNFDELRAMANPPILVRNAVEAVAILIMNEGDKNVTWEDARKIMKGQDFINKVLYLDKKAVKPQTSSQIKKRINNNDWDVERINKASRAAGPLAKWVESVITFLNILETVQPLEKEIEKLQEETKVAEDQYNEQRDIICELEKKLVQYKNDYAQLISQVQNIKQEMEMVENKIKRSINLIDNLKSEKERWSETFINLEEASETFVGDCLIAAAFCAYIGFFEHYERQRLKRTWGEIIKMHYIKYRNDLSFIEFLSRPSERLQWIGNELPSDDLSIENAIIINNYIRYPMIIDPSDQATTFLLNQYSDKKILKTSFSDKNFIKNLESALRFGSTLLVYDVEKIDAILNSVLNQETHKQGGRLLITIGDSEVDFSPSFNLFLTSRDAHFQFTPDLCSRVTFVNFTLTPSSLQNQCLNMILKNERPDIDKKRCDLLKLQGEYKVKIRELEESLLLELSNVKGNILDDDNVISTMEKLKVQGAEASKEVNIAEEVMVEVENVSNQYLFLAQGSARIYFILQHLCNINFLYQYDLNFFFNIMKDMFNNDHLLSIVKKKDHYKERLKVLEDLLFSLTYNRVARGLLQEDRYVFGLQLCYVKSIINPNIDMDQSYLHYLLKDHYSNQEIDEFEHKKIEKNLLPEYNDEQINALNNLIKHKSFSNLKKCILNNKQKWIELLHSAEPEELVCSILNDMNMSEESMDKSDEMLNKNKNLNILNNVEFGKDDDIPEEKRYINNDNTNMDTTTKNNNNMNNNNNMNNNNNYMLQNKNDISSCLKESLIIKAIRPDKLENCFNKIINHILGRDFLWIPELSMNDFEKYVKENANGNIPIVLISSPGFDPSNKVQQLSEKCKIPLFSIAMGSEEGYISAERVIFTAQSNGGWVLLKNIHISTKWLHELEKNIHKATTNKNFRLFLTMEFNPRIPQSLMRISLTFMFEPPVGIKFSILRSFSLFLENRELCEPKIARLRLYFIVSYLHAIILERRRYTPIGWTKKYEFSDSDLMCALSVVDSWLDKASTKIGKNVSEHIDPCNIPWEAIKKILNEAIYGGRLDNMVDQKILDTFIDHLMNSNSFETDFKLNICNSTSLNKDFLVSPDLFRNINDYINWTNNMSNTDLPAWLGFGQQAEGLLTTRTNFSIISKWNILYSKSRSDVYEPLPHSPLTKSLNEEKYISFEQYKIKNIKEKTIKDKDKNKDEDKNKNKENDDNNKKHIGNNKLVISSSERTESETSESSCTVSRSIHVYSNNENILFINKILENLPQNIPCLEKNEEKLRNAVFRCFERENNLFSDLLKLIKTNLNQLKNVLEEKVKYTNKIRALAKDLNSFNVPSNWLLDGNTTNLNLTNWLKELINRLYQIIVITLEFNEKSCIDINEKKKQKNINIENNEDHNLNDFYKRNNDNILSHFKLNNKEKKLSINFIWLGGLFYPRAFITATRQLSAFKFKNSLDDLELSVLIGNNNNMKYDDMIHFTITCLSIEGAEWSNKDNCLILSDELTIDLPPVTLTWEKKEILKQKQKESSSSLHFMNLPIYLDKSRNSFIGFWNFPVSKGISEQIWYQRGVAIFLSKTY.

The stem stretch occupies residues 1-1957; the sequence is MELEKTHLIN…IIKMADATFE (1957 aa). Positions 1677–1705 form a coiled coil; sequence QMEGFQKQLDRLSDSLSKIQKALGEYLEK. An AAA 1 region spans residues 1958-2179; the sequence is YGYEYLGMCE…LRSLKSVLNS (222 aa). 1996–2003 is a binding site for ATP; sequence GPAGTGKT. The tract at residues 2203-2223 is disordered; sequence FNETLDNNNNNDNNNERKTTT. Over residues 2204-2215 the composition is skewed to low complexity; it reads NETLDNNNNNDN. 3 AAA regions span residues 2281–2632, 2751–3004, and 3097–3367; these read NEIH…YEYI, DVDR…WKLA, and IFNE…GNRY. 2319–2326 is a binding site for ATP; that stretch reads GDVGTGKS. A disordered region spans residues 2507–2529; the sequence is EKNQNGNENGNENEKKNINIINN. Residues 2790–2797 and 3135–3142 each bind ATP; these read GPPGSGKT and GASGAGKT. Positions 3386–3701 are stalk; that stretch reads IDEKKEEVSS…ETFINLEEAS (316 aa). Coiled-coil stretches lie at residues 3388–3466 and 3970–3997; these read EKKE…LDEQ and TMEK…EVEN. AAA stretches follow at residues 3754 to 3983 and 4289 to 4507; these read LSRP…EASK and FNKI…VVDS. Residues 4686 to 4705 are compositionally biased toward basic and acidic residues; sequence KDKNKDEDKNKNKENDDNNK. The tract at residues 4686 to 4727 is disordered; sequence KDKNKDEDKNKNKENDDNNKKHIGNNKLVISSSERTESETSE.

This sequence belongs to the dynein heavy chain family. Consists of at least two heavy chains and a number of intermediate and light chains.

The protein localises to the cytoplasm. It localises to the cytoskeleton. Its function is as follows. Acts as a motor for the intracellular retrograde motility of vesicles and organelles along microtubules. Dynein has ATPase activity; the force-producing power stroke is thought to occur on release of ADP. This Plasmodium falciparum (isolate 3D7) protein is Dynein heavy chain-like protein 1.